The primary structure comprises 179 residues: Large ribosomal subunit protein uL5 (179 aa).

This sequence belongs to the universal ribosomal protein uL5 family. Part of the 50S ribosomal subunit; part of the 5S rRNA/L5/L18/L25 subcomplex. Contacts the 5S rRNA and the P site tRNA. Forms a bridge to the 30S subunit in the 70S ribosome.

Its function is as follows. This is one of the proteins that bind and probably mediate the attachment of the 5S RNA into the large ribosomal subunit, where it forms part of the central protuberance. In the 70S ribosome it contacts protein S13 of the 30S subunit (bridge B1b), connecting the 2 subunits; this bridge is implicated in subunit movement. Contacts the P site tRNA; the 5S rRNA and some of its associated proteins might help stabilize positioning of ribosome-bound tRNAs. The protein is Large ribosomal subunit protein uL5 of Alkalilimnicola ehrlichii (strain ATCC BAA-1101 / DSM 17681 / MLHE-1).